We begin with the raw amino-acid sequence, 476 residues long: Serine/threonine-protein kinase WAG1 (476 aa).

The Protein kinase domain occupies 93-400 (FKLVRHLGTG…AQDIKRHEFF (308 aa)). Residues 99 to 107 (LGTGNLGRV) and Lys-124 contribute to the ATP site. The active-site Proton acceptor is the Asp-219.

The protein belongs to the protein kinase superfamily. Ser/Thr protein kinase family. Expressed in root tips and lateral root primordia.

The protein resides in the cytoplasm. It localises to the cytosol. It carries out the reaction L-seryl-[protein] + ATP = O-phospho-L-seryl-[protein] + ADP + H(+). It catalyses the reaction L-threonyl-[protein] + ATP = O-phospho-L-threonyl-[protein] + ADP + H(+). In terms of biological role, serine/threonine-protein kinase involved in the regulation of auxin signaling. Acts as a positive regulator of cellular auxin efflux and regulates organ development by enhancing PIN-mediated polar auxin transport. Phosphorylates conserved serine residues in the PIN auxin efflux carriers. Phosphorylation of PIN proteins is required and sufficient for apical-basal PIN polarity that enables directional intercellular auxin fluxes, which mediate differential growth, tissue patterning and organogenesis. Acts as a suppressor of root waving. In Arabidopsis thaliana (Mouse-ear cress), this protein is Serine/threonine-protein kinase WAG1 (WAG1).